The chain runs to 64 residues: uncharacterized protein (64 aa).

This is an uncharacterized protein from Bos taurus (Bovine).